We begin with the raw amino-acid sequence, 384 residues long: Glucans biosynthesis protein C (384 aa).

The next 10 membrane-spanning stretches (helical) occupy residues 17-37, 54-74, 91-111, 140-160, 173-193, 212-232, 240-260, 274-294, 311-331, and 338-358; these read AWLMLLGIPFHISLIYSTHSW, FIHAFRMQVFFVISGYFSYML, VGIPMLTAIPLLTLPQFILLQ, LWFLLVLVILTTVSIGIFTWF, AISLAKLSLIFFLLGVAYAAI, FIVMQTLFYVPFFILGALAFI, FTTPSRGCTLGAAVAFIAYLL, TESVITMVMGLWMVNVVFSLG, ASLFIYLVHHPLTLFFGAYIT, and LIGFLCGLIFVMGIALILYEI.

It belongs to the acyltransferase 3 family. OpgC subfamily.

It is found in the cell membrane. The protein operates within glycan metabolism; osmoregulated periplasmic glucan (OPG) biosynthesis. Functionally, necessary for the succinyl substitution of periplasmic glucans. Could catalyze the transfer of succinyl residues from the cytoplasmic side of the membrane to the nascent glucan backbones on the periplasmic side of the membrane. This Salmonella typhimurium (strain LT2 / SGSC1412 / ATCC 700720) protein is Glucans biosynthesis protein C.